The chain runs to 330 residues: Putative glycosyltransferase ORF330 (330 aa).

The protein belongs to the glycosyltransferase group 1 family. Glycosyltransferase 4 subfamily.

The sequence is that of Putative glycosyltransferase ORF330 from Acidianus filamentous virus 2 (isolate Italy/Pozzuoli) (AFV-2).